Here is a 156-residue protein sequence, read N- to C-terminus: Small ribosomal subunit protein uS7 (156 aa).

It belongs to the universal ribosomal protein uS7 family. In terms of assembly, part of the 30S ribosomal subunit. Contacts proteins S9 and S11.

Functionally, one of the primary rRNA binding proteins, it binds directly to 16S rRNA where it nucleates assembly of the head domain of the 30S subunit. Is located at the subunit interface close to the decoding center, probably blocks exit of the E-site tRNA. The polypeptide is Small ribosomal subunit protein uS7 (Rhodococcus opacus (strain B4)).